A 491-amino-acid polypeptide reads, in one-letter code: Chromosomal replication initiator protein DnaA (491 aa).

The segment at 1–68 (MTSIWGQIQH…RTAACGVIGD (68 aa)) is domain I, interacts with DnaA modulators. Positions 68–146 (DTVEVVVTAG…PLDWAPVPQS (79 aa)) are domain II. A domain III, AAA+ region region spans residues 147-364 (RTNWRFSFDD…SCLHNLILKA (218 aa)). The ATP site is built by glycine 190, glycine 192, lysine 193, and threonine 194. Residues 365-491 (KLLNRQISLE…RNGRITHARH (127 aa)) are domain IV, binds dsDNA.

The protein belongs to the DnaA family. Oligomerizes as a right-handed, spiral filament on DNA at oriC.

The protein resides in the cytoplasm. In terms of biological role, plays an essential role in the initiation and regulation of chromosomal replication. ATP-DnaA binds to the origin of replication (oriC) to initiate formation of the DNA replication initiation complex once per cell cycle. Binds the DnaA box (a 9 base pair repeat at the origin) and separates the double-stranded (ds)DNA. Forms a right-handed helical filament on oriC DNA; dsDNA binds to the exterior of the filament while single-stranded (ss)DNA is stabiized in the filament's interior. The ATP-DnaA-oriC complex binds and stabilizes one strand of the AT-rich DNA unwinding element (DUE), permitting loading of DNA polymerase. After initiation quickly degrades to an ADP-DnaA complex that is not apt for DNA replication. Binds acidic phospholipids. The sequence is that of Chromosomal replication initiator protein DnaA from Nitratidesulfovibrio vulgaris (strain ATCC 29579 / DSM 644 / CCUG 34227 / NCIMB 8303 / VKM B-1760 / Hildenborough) (Desulfovibrio vulgaris).